The chain runs to 541 residues: Glucose-6-phosphate isomerase (541 aa).

E346 functions as the Proton donor in the catalytic mechanism. Residues H377 and K506 contribute to the active site.

This sequence belongs to the GPI family.

The protein localises to the cytoplasm. It catalyses the reaction alpha-D-glucose 6-phosphate = beta-D-fructose 6-phosphate. It functions in the pathway carbohydrate biosynthesis; gluconeogenesis. It participates in carbohydrate degradation; glycolysis; D-glyceraldehyde 3-phosphate and glycerone phosphate from D-glucose: step 2/4. Catalyzes the reversible isomerization of glucose-6-phosphate to fructose-6-phosphate. This Rhizobium johnstonii (strain DSM 114642 / LMG 32736 / 3841) (Rhizobium leguminosarum bv. viciae) protein is Glucose-6-phosphate isomerase.